The sequence spans 483 residues: Myosin-binding protein H (483 aa).

The segment covering 1–15 has biased composition (polar residues); that stretch reads MTGKATSEASVSTPE. The tract at residues 1 to 78 is disordered; it reads MTGKATSEAS…PEPPSEDVPS (78 aa). Phosphothreonine is present on residues threonine 2, threonine 6, and threonine 26. A compositionally biased stretch (low complexity) spans 41 to 66; that stretch reads QEQAPEPQKPQAQDPAAPAASAMPAA. Positions 79–174 constitute a Fibronectin type-III 1 domain; it reads APLRLTLEDV…LDQPVHIQEI (96 aa). Residues 178-266 enclose the Ig-like C2-type 1 domain; sequence PKIRVPRHLR…EGLEAKASID (89 aa). Residues 275 to 370 enclose the Fibronectin type-III 2 domain; sequence PPSSIKLLDV…TKELAHIHKA (96 aa). An Ig-like C2-type 2 domain is found at 388 to 472; it reads PSFTQPLADH…INVLGEASVD (85 aa).

It belongs to the immunoglobulin superfamily. MyBP family. As to expression, skeletal muscle. Expressed at low levels in heart ventricles.

Binds to myosin; probably involved in interaction with thick myofilaments in the A-band. This chain is Myosin-binding protein H (Mybph), found in Mus musculus (Mouse).